The chain runs to 540 residues: E3 ubiquitin-protein ligase rnf8-A (540 aa).

The FHA domain occupies 30–84; sequence VTLGRGLGVTYQLKPTLCPLMISRTHCLFKQNTGGEWTVTDNKSLNGVWRNKERL. The tract at residues 128–205 is disordered; the sequence is LIRPLPDKTK…SGTESRLNDS (78 aa). Composition is skewed to polar residues over residues 152–162 and 179–200; these read ASGNEGPSNFS and SSHTTDLYKQPTVEPTASGTES. Residues 382–420 form an RING-type zinc finger; sequence CIICSEHFIEAVTLNCAHSFCSYCIKSWKKRKEECPICR. A disordered region spans residues 517–540; that stretch reads GTDELDSSDFESDDDEEEDSFLII. A compositionally biased stretch (acidic residues) spans 519–540; it reads DELDSSDFESDDDEEEDSFLII.

Belongs to the RNF8 family. In terms of assembly, homodimer. Forms a E2-E3 ubiquitin ligase complex composed of the rnf8 homodimer and a E2 heterodimer of ube2n and ube2v2.

It localises to the nucleus. The enzyme catalyses S-ubiquitinyl-[E2 ubiquitin-conjugating enzyme]-L-cysteine + [acceptor protein]-L-lysine = [E2 ubiquitin-conjugating enzyme]-L-cysteine + N(6)-ubiquitinyl-[acceptor protein]-L-lysine.. It participates in protein modification; protein ubiquitination. Its function is as follows. E3 ubiquitin-protein ligase that plays a key role in DNA damage signaling via 2 distinct roles: by mediating the 'Lys-63'-linked ubiquitination of histones H2A and H2AX and promoting the recruitment of DNA repair proteins at double-strand breaks (DSBs) sites, and by catalyzing 'Lys-48'-linked ubiquitination to remove target proteins from DNA damage sites. Following DNA DSBs, it is recruited to the sites of damage by ATM-phosphorylated mdc1 and catalyzes the 'Lys-63'-linked ubiquitination of histones H2A and H2AX, thereby promoting the formation of tp53bp1 and brca1 ionizing radiation-induced foci (IRIF). H2A ubiquitination also mediates the ATM-dependent transcriptional silencing at regions flanking DSBs in cis, a mechanism to avoid collision between transcription and repair intermediates. Also catalyzes the formation of 'Lys-48'-linked polyubiquitin chains, leading to degradation of substrate proteins. In addition to its function in damage signaling, also plays a role in higher-order chromatin structure by mediating extensive chromatin decondensation. This chain is E3 ubiquitin-protein ligase rnf8-A, found in Xenopus laevis (African clawed frog).